Reading from the N-terminus, the 175-residue chain is Ribosome maturation factor RimM (175 aa).

One can recognise a PRC barrel domain in the interval 94–166; that stretch reads SDSWYEHELI…FIRLVPPGGL (73 aa).

This sequence belongs to the RimM family. As to quaternary structure, binds ribosomal protein uS19.

The protein resides in the cytoplasm. Functionally, an accessory protein needed during the final step in the assembly of 30S ribosomal subunit, possibly for assembly of the head region. Essential for efficient processing of 16S rRNA. May be needed both before and after RbfA during the maturation of 16S rRNA. It has affinity for free ribosomal 30S subunits but not for 70S ribosomes. The protein is Ribosome maturation factor RimM of Renibacterium salmoninarum (strain ATCC 33209 / DSM 20767 / JCM 11484 / NBRC 15589 / NCIMB 2235).